The following is a 1041-amino-acid chain: MALRSDYEHGRADSYRVATVIATDDDNRTADGQYKSRRKMPAKVNKKENLDDLKQELDIDFHKISPEELYQRFQTHPENGLSHAKAKENLERDGPNALTPPKQTPEWVKFCKNLFGGFAMLLWIGAILCFVAYSIQASTSEEPADDNLYLGIVLSAVVIVTGIFSYYQESKSSKIMESFKNMVPQFATVIREGEKLTLRAEDLVLGDVVEVKFGDRIPADIRIIEARNFKVDNSSLTGESEPQSRGAEFTHENPLETKNLAFFSTNAVEGTAKGVVISCGDHTVMGRIAGLASGLDTGETPIAKEIHHFIHLITGVAVFLGVTFFVIAFILGYHWLDAVIFLIGIIVANVPEGLLATVTVCLTLTAKRMASKNCLVKNLEAVETLGSTSTICSDKTGTLTQNRMTVAHMWFDNQIIEADTTEDQSGVQYDRTSPGFKALSRIATLCNRAEFKGGQDGVPILKKEVSGDASEAALLKCMELALGDVMNIRKRNKKIAEVPFNSTNKYQVSIHETEDTNDPRYLLVMKGAPERILERCSTIFINGKEKVLDEEMKEAFNNAYMELGGLGERVLGFCDFMLPSDKYPNGFKFNTDDINFPIDNLRFVGLMSMIDPPRAAVPDAVAKCRSAGIKVIMVTGDHPITAKAIAKSVGIISEGNETVEDIAQRLNIPVSEVNPREAKAAVVHGAELRDVSSDQLDEILRYHTEIVFARTSPQQKLIIVEGCQRMGAIVAVTGDGVNDSPALKKADIGVAMGIAGSDVSKQAADMILLDDNFASIVTGVEEGRLIFDNLKKSIAYTLTSNIPEISPFLAFILCDIPLPLGTVTILCIDLGTDMVPAISLAYEHAEADIMKRPPRDPFNDKLVNSRLISMAYGQIGMIQAAAGFFVYFVIMAENGFLPKKLFGIRKMWDSKAVNDLTDSYGQEWTYRDRKTLEYTCHTAFFISIVVVQWADLIICKTRRNSIFQQGMRNWALNFGLVFETVLAAFLSYCPGMEKGLRMYPLKLVWWFPAIPFALAIFIYDETRRFYLRRNPGGWLEQETYY.

The next 4 helical transmembrane spans lie at 115–135 (FGGF…AYSI), 147–167 (NLYL…FSYY), 312–332 (LITG…FILG), and 338–358 (AVIF…LATV). Catalysis depends on aspartate 394, which acts as the 4-aspartylphosphate intermediate. Residue lysine 526 coordinates ATP. A run of 4 helical transmembrane segments spans residues 808–828 (FLAF…ILCI), 870–890 (MAYG…YFVI), 935–955 (TCHT…LIIC), and 970–990 (WALN…SYCP).

The protein belongs to the cation transport ATPase (P-type) (TC 3.A.3) family. Type IIC subfamily. The sodium/potassium-transporting ATPase is composed of a catalytic alpha subunit, an auxiliary non-catalytic beta subunit and an additional regulatory subunit. As to expression, high levels are found in some adult tissues: Malpighian tubules, indirect flight muscles, tubular leg muscles and throughout the nervous system (brain, optic lobes, retina and ventral thoracic neuromere). Lower levels are detected at the posterior end where the reproductive organs and rectum are located.

It is found in the cell membrane. It carries out the reaction K(+)(out) + Na(+)(in) + ATP + H2O = K(+)(in) + Na(+)(out) + ADP + phosphate + H(+). In terms of biological role, this is the catalytic component of the active enzyme, which catalyzes the hydrolysis of ATP coupled with the exchange of sodium and potassium ions across the plasma membrane. This action creates the electrochemical gradient of sodium and potassium ions, providing the energy for active transport of various nutrients. The sequence is that of Sodium/potassium-transporting ATPase subunit alpha (Atpalpha) from Drosophila melanogaster (Fruit fly).